Reading from the N-terminus, the 124-residue chain is MATINQLVRKPRAKQVVKSNVPALEACPQKRGVCTRVYTTTPKKPNSALRKVCRVRLTNGFEVTSYIGGEGHNLQEHSVVLIRGGRVKDLPGVRYHTVRGALDCAGVNDRKQGRSKYGVKRPKS.

D89 is modified (3-methylthioaspartic acid).

The protein belongs to the universal ribosomal protein uS12 family. As to quaternary structure, part of the 30S ribosomal subunit. Contacts proteins S8 and S17. May interact with IF1 in the 30S initiation complex.

In terms of biological role, with S4 and S5 plays an important role in translational accuracy. Functionally, interacts with and stabilizes bases of the 16S rRNA that are involved in tRNA selection in the A site and with the mRNA backbone. Located at the interface of the 30S and 50S subunits, it traverses the body of the 30S subunit contacting proteins on the other side and probably holding the rRNA structure together. The combined cluster of proteins S8, S12 and S17 appears to hold together the shoulder and platform of the 30S subunit. This chain is Small ribosomal subunit protein uS12, found in Vibrio campbellii (strain ATCC BAA-1116).